The sequence spans 182 residues: Orotate phosphoribosyltransferase (182 aa).

Residues Arg93, Lys94, Lys97, and 119–127 (EDIATTGTS) each bind 5-phospho-alpha-D-ribose 1-diphosphate. 2 residues coordinate orotate: Thr123 and Arg151.

Belongs to the purine/pyrimidine phosphoribosyltransferase family. PyrE subfamily. Homodimer. Requires Mg(2+) as cofactor.

It catalyses the reaction orotidine 5'-phosphate + diphosphate = orotate + 5-phospho-alpha-D-ribose 1-diphosphate. It participates in pyrimidine metabolism; UMP biosynthesis via de novo pathway; UMP from orotate: step 1/2. Catalyzes the transfer of a ribosyl phosphate group from 5-phosphoribose 1-diphosphate to orotate, leading to the formation of orotidine monophosphate (OMP). The sequence is that of Orotate phosphoribosyltransferase from Haloquadratum walsbyi (strain DSM 16790 / HBSQ001).